Consider the following 90-residue polypeptide: Barrier-to-autointegration factor-like protein (90 aa).

This sequence belongs to the BAF family. Homodimer. Heterodimerizes with BANF1.

It localises to the nucleus. Its subcellular location is the cytoplasm. May play a role in BANF1 regulation and influence tissue-specific roles of BANF1. In Bos taurus (Bovine), this protein is Barrier-to-autointegration factor-like protein (BANF2).